A 315-amino-acid chain; its full sequence is N-acetyl-gamma-glutamyl-phosphate reductase (315 aa).

C117 is a catalytic residue.

Belongs to the NAGSA dehydrogenase family. Type 2 subfamily.

Its subcellular location is the cytoplasm. The enzyme catalyses N-acetyl-L-glutamate 5-semialdehyde + phosphate + NADP(+) = N-acetyl-L-glutamyl 5-phosphate + NADPH + H(+). It participates in amino-acid biosynthesis; L-arginine biosynthesis; N(2)-acetyl-L-ornithine from L-glutamate: step 3/4. Catalyzes the NADPH-dependent reduction of N-acetyl-5-glutamyl phosphate to yield N-acetyl-L-glutamate 5-semialdehyde. This Burkholderia lata (strain ATCC 17760 / DSM 23089 / LMG 22485 / NCIMB 9086 / R18194 / 383) protein is N-acetyl-gamma-glutamyl-phosphate reductase.